Consider the following 117-residue polypeptide: Immunoglobulin lambda variable 6-57 (117 aa).

Residues 1 to 19 (MAWAPLLLTLLAHCTGSWA) form the signal peptide. Residues 20–44 (NFMLTQPHSVSESPGKTVTISCTGS) are framework-1. Positions 20–117 (NFMLTQPHSV…YYCQSYDSSN (98 aa)) constitute an Ig-like domain. Cys-41 and Cys-110 are oxidised to a cystine. Positions 45 to 52 (SGSIASNY) are complementarity-determining-1. The segment at 53 to 69 (VQWYQQRPGSAPTTVIY) is framework-2. The tract at residues 65 to 97 (TTVIYEDNQRPSGVPDRFSGSIDSSSNSASLTI) is disordered. A complementarity-determining-2 region spans residues 70–72 (EDN). The interval 73–110 (QRPSGVPDRFSGSIDSSSNSASLTISGLKTEDEADYYC) is framework-3. A compositionally biased stretch (low complexity) spans 83–97 (SGSIDSSSNSASLTI). A complementarity-determining-3 region spans residues 111–117 (QSYDSSN).

Immunoglobulins are composed of two identical heavy chains and two identical light chains; disulfide-linked.

The protein resides in the secreted. Its subcellular location is the cell membrane. In terms of biological role, v region of the variable domain of immunoglobulin light chains that participates in the antigen recognition. Immunoglobulins, also known as antibodies, are membrane-bound or secreted glycoproteins produced by B lymphocytes. In the recognition phase of humoral immunity, the membrane-bound immunoglobulins serve as receptors which, upon binding of a specific antigen, trigger the clonal expansion and differentiation of B lymphocytes into immunoglobulins-secreting plasma cells. Secreted immunoglobulins mediate the effector phase of humoral immunity, which results in the elimination of bound antigens. The antigen binding site is formed by the variable domain of one heavy chain, together with that of its associated light chain. Thus, each immunoglobulin has two antigen binding sites with remarkable affinity for a particular antigen. The variable domains are assembled by a process called V-(D)-J rearrangement and can then be subjected to somatic hypermutations which, after exposure to antigen and selection, allow affinity maturation for a particular antigen. The chain is Immunoglobulin lambda variable 6-57 from Homo sapiens (Human).